Here is a 441-residue protein sequence, read N- to C-terminus: Xaa-Pro dipeptidase (441 aa).

5 residues coordinate Mn(2+): aspartate 244, aspartate 255, histidine 336, glutamate 381, and glutamate 420.

It belongs to the peptidase M24B family. Bacterial-type prolidase subfamily. The cofactor is Mn(2+).

It carries out the reaction Xaa-L-Pro dipeptide + H2O = an L-alpha-amino acid + L-proline. Its function is as follows. Splits dipeptides with a prolyl residue in the C-terminal position. In Xanthomonas campestris pv. campestris (strain B100), this protein is Xaa-Pro dipeptidase.